The primary structure comprises 184 residues: Bacterial microcompartment shell protein PduT (184 aa).

BMC domains follow at residues 4–86 and 96–182; these read AIGI…PAIS and AVGI…RQMV. Position 38 (Cys38) interacts with [4Fe-4S] cluster.

It belongs to the bacterial microcompartments protein family. Homotrimerizes to form a pseudohexamer with a large central pore, which is probably the binding site for the [4Fe-4S] center. Interacts with PduS. Originally suggested to be a homotetramer; this is incorrect. The cofactor is [4Fe-4S] cluster.

The protein resides in the bacterial microcompartment. Its pathway is polyol metabolism; 1,2-propanediol degradation. Functionally, a minor shell protein of the bacterial microcompartment (BMC) dedicated to 1,2-propanediol (1,2-PD) degradation. Overexpression of this protein leads to cells with either deposits or having lamina-like structures in the cytoplasm. Not absolutely required to make artificial BMCs. May selectively transport specific metabolites. Expression of a cosmid containing the full 21-gene pdu operon in E.coli allows E.coli to grow on 1,2-propanediol (1,2-PD) with the appearance of bacterial microcompartments (BMC) in its cytoplasm. Its function is as follows. The 1,2-PD-specific bacterial microcompartment (BMC) concentrates low levels of 1,2-PD catabolic enzymes, concentrates volatile reaction intermediates thus enhancing pathway flux and keeps the level of toxic, mutagenic propionaldehyde low. The protein is Bacterial microcompartment shell protein PduT of Citrobacter freundii.